Here is a 27-residue protein sequence, read N- to C-terminus: uncharacterized protein (27 aa).

Its subcellular location is the plastid. It is found in the chloroplast. This is an uncharacterized protein from Marchantia polymorpha (Common liverwort).